The chain runs to 348 residues: Phosphate acyltransferase (348 aa).

The protein belongs to the PlsX family. As to quaternary structure, homodimer. Probably interacts with PlsY.

The protein resides in the cytoplasm. The enzyme catalyses a fatty acyl-[ACP] + phosphate = an acyl phosphate + holo-[ACP]. It participates in lipid metabolism; phospholipid metabolism. In terms of biological role, catalyzes the reversible formation of acyl-phosphate (acyl-PO(4)) from acyl-[acyl-carrier-protein] (acyl-ACP). This enzyme utilizes acyl-ACP as fatty acyl donor, but not acyl-CoA. The protein is Phosphate acyltransferase of Synechocystis sp. (strain ATCC 27184 / PCC 6803 / Kazusa).